The sequence spans 356 residues: L-amino acid-D/L-Glu epimerase (356 aa).

Residues Arg25, Ser136, and 161-163 (KVK) contribute to the substrate site. Position 191 (Asp191) interacts with Mg(2+). Asn193 serves as a coordination point for substrate. The Mg(2+) site is built by Glu219 and Asp244. Substrate-binding positions include Lys268, 296–298 (CMM), and 320–322 (DLD).

It belongs to the mandelate racemase/muconate lactonizing enzyme family. The cofactor is Mg(2+).

Its function is as follows. Catalyzes the epimerization of dipeptides with L-Glu in the second position. Has epimerase activity with L-Ala-L-Glu, L-Pro-L-Glu, L-Val-L-Glu, L-Thr-L-Glu and L-Met-L-Glu (in vitro). The protein is L-amino acid-D/L-Glu epimerase of Francisella philomiragia subsp. philomiragia (strain ATCC 25017 / CCUG 19701 / FSC 153 / O#319-036).